The sequence spans 433 residues: MKALGEVFSKLVEKIRGVSYIDEATLQELSREIQRALLKADVPLDMVKTFTENAVKRMREEKPPAGIPPREYVLYILYDELVKLLGGEQPAEFKPVKKPYLVLLLGVEGSGKTTTAAKLARYLVKRGYRVGLVETDTIRPAAFDQLKQLAEKIGVPFYGERDSKDAVEIARRGVQNFKNMDVVIIDTAGRHKNEEALLQEVKMIYEAVNPDEVILVIDATVGKLAAAQAEAFMKYLPIHSVIITKMDSTARGGGALAAVIKTGARVKFIGVGEDVDEFDLFNPRKFVARVLGMGDLDALVEKIKAVFEEEKVLQEIESGRLDLLTFKKQIEGLLKLGPLSKVLQLLPGGFAAKISEEQVELSQKNLKKWYAILSSMTIEELKNPDILNASRIRRIALGAGVTPKDVKEMLTVYENLKKMSKTLKRQLRMRIPK.

Residues 106–113 (GVEGSGKT), 186–190 (DTAGR), and 244–247 (TKMD) each bind GTP.

Belongs to the GTP-binding SRP family. SRP54 subfamily. Part of the signal recognition particle protein translocation system, which is composed of SRP and FtsY. Archaeal SRP consists of a 7S RNA molecule of 300 nucleotides and two protein subunits: SRP54 and SRP19.

It is found in the cytoplasm. It catalyses the reaction GTP + H2O = GDP + phosphate + H(+). Its function is as follows. Involved in targeting and insertion of nascent membrane proteins into the cytoplasmic membrane. Binds to the hydrophobic signal sequence of the ribosome-nascent chain (RNC) as it emerges from the ribosomes. The SRP-RNC complex is then targeted to the cytoplasmic membrane where it interacts with the SRP receptor FtsY. This Pyrobaculum islandicum (strain DSM 4184 / JCM 9189 / GEO3) protein is Signal recognition particle 54 kDa protein.